Consider the following 195-residue polypeptide: Rubrerythrin (195 aa).

In terms of domain architecture, Ferritin-like diiron spans 1-150 (MKSLKGTKTA…KLAKNIEEGK (150 aa)). 10 residues coordinate Fe(3+): E20, E53, E98, E101, E132, H135, C162, C165, C178, and C181. Residues 157 to 195 (VVLWKCGNCGFIWEGAEAPLKCPACLHPQAYFEVFKETY) enclose the Rubredoxin-like domain.

Homodimer. Possesses two rubredoxin-like centers and two non-sulfur oxo-bridged di-iron centers per dimer. The cofactor is Fe(3+).

Its subcellular location is the cytoplasm. May provide oxidative stress protection via catalytic reduction of intracellular hydrogen peroxide. The protein is Rubrerythrin (rbr) of Clostridium perfringens (strain 13 / Type A).